Reading from the N-terminus, the 914-residue chain is MFEALKEVLGEINSKLAAVNNELSSKIMSENIVSTRPVAQAQYCGPYKLEKTLGKGQTGLVKTGTHCITGRKVAIKIVNKEKLSESVLQKVEREIAIMKLIEHPHVLHLYDVYENKKYLYLLLEHVSGGELFDYLVRKGRLMSKEARKFFRQIISALDFCHAHNICHRDLKPENLLLDERNNIKVADFGMASLQVEGSMLETSCGSPHYACPEVIRGEKYDGRKADVWSCGVILYALLVGALPFDDDNLRNLLEKVKRGVFHIPHFVPADVQSLLRAMIEVDPGKRYSLADVFKHPWVSGTTKADPELELPMSQVVQTHVIPGEDSIDPDVLRHMNCLGCFKDKQKLINELLSPKHNTEKMVYFLLLDRKRRRPAQEDDTEIVLRGAAQNNDPPKKRTDSSRTSRYPMGSIADGSPINPRKTYGRNQKSGRHSSLGGSPTESPRSSTRDLFGSSSSGSYSARAGEDRDRGRSASRSTNSYHYYTQPVDPQTLAEAARHVRDAQERRESRDSGRGSSRKESKDRSDKSASSSSCKNDASSTSSVPHKYSPPSVMSESVVVSSSTMNSTNSSTNSLIAGNSQTSIGSTSGPWRSKLNNIKNSFLGTPRFHRRKMSNGTAESDSEDSQMIDTTDLVKKSWFGSLASSMSVERDDTHCVPVQGKTLNSIKAELIRAFLQIHELSHSVVGQNCFRVEYKRGPTVGGSVFSRGIKMNVDIIPSPQQVVIAGETPTYVVQFVLLAGPVRRFKRLVEHLSAILQNSTQQRADRQQQAALMVRPRRLSDSSVGSACSDSESNASSINMIARHSDKTETTSATSSDPYGPSPSMRSVGSGTANSYKSPTPHRRNTTAVTASSSSASNRYGPSSSSSGSYSNNADYSYHPEYSQRSNGSSAPKNQYSPGSQRSFAFSMFNKADKV.

Positions 47–298 (YKLEKTLGKG…LADVFKHPWV (252 aa)) constitute a Protein kinase domain. ATP contacts are provided by residues 53-61 (LGKGQTGLV) and Lys76. Asp169 acts as the Proton acceptor in catalysis. Disordered stretches follow at residues 375-551 (AQED…SPPS), 563-590 (TMNS…SGPW), and 757-914 (NSTQ…ADKV). Positions 393–402 (PPKKRTDSSR) are enriched in basic and acidic residues. Low complexity predominate over residues 444 to 462 (RSSTRDLFGSSSSGSYSAR). The segment covering 473–482 (ASRSTNSYHY) has biased composition (polar residues). Positions 495–526 (AARHVRDAQERRESRDSGRGSSRKESKDRSDK) are enriched in basic and acidic residues. Low complexity-rich tracts occupy residues 527-551 (SASS…SPPS) and 563-573 (TMNSTNSSTNS). A compositionally biased stretch (polar residues) spans 574–590 (LIAGNSQTSIGSTSGPW). The segment covering 780 to 796 (DSSVGSACSDSESNASS) has biased composition (low complexity). Positions 823-837 (SMRSVGSGTANSYKS) are enriched in polar residues. The segment covering 850–876 (ASSSSASNRYGPSSSSSGSYSNNADYS) has biased composition (low complexity). Residues 882–903 (SQRSNGSSAPKNQYSPGSQRSF) show a composition bias toward polar residues.

This sequence belongs to the protein kinase superfamily. CAMK Ser/Thr protein kinase family. SNF1 subfamily. Interacts with strd-1 and nab-1. Mg(2+) is required as a cofactor. In terms of tissue distribution, expressed in neurons. Colocalizes with strd-1 along the dorsal nerve cord.

It is found in the synapse. The enzyme catalyses L-seryl-[protein] + ATP = O-phospho-L-seryl-[protein] + ADP + H(+). It catalyses the reaction L-threonyl-[protein] + ATP = O-phospho-L-threonyl-[protein] + ADP + H(+). Regulates both neuronal polarity and synaptic organization when bound to strd-1. Kinase activity is required for the establishment, but not the maintenance, of both processes. Binding to nab-1 is essential for role in restricting axonal fate during neuronal polarization but is not required for regulating synapse morphology. The sequence is that of Serine/threonine kinase SAD-1 from Caenorhabditis elegans.